The sequence spans 156 residues: Small ribosomal subunit protein uS7 (156 aa).

It belongs to the universal ribosomal protein uS7 family. Part of the 30S ribosomal subunit. Contacts proteins S9 and S11.

In terms of biological role, one of the primary rRNA binding proteins, it binds directly to 16S rRNA where it nucleates assembly of the head domain of the 30S subunit. Is located at the subunit interface close to the decoding center, probably blocks exit of the E-site tRNA. The chain is Small ribosomal subunit protein uS7 from Leuconostoc citreum (strain KM20).